A 202-amino-acid polypeptide reads, in one-letter code: Large ribosomal subunit protein bL25 (202 aa).

The protein belongs to the bacterial ribosomal protein bL25 family. CTC subfamily. As to quaternary structure, part of the 50S ribosomal subunit; part of the 5S rRNA/L5/L18/L25 subcomplex. Contacts the 5S rRNA. Binds to the 5S rRNA independently of L5 and L18.

This is one of the proteins that binds to the 5S RNA in the ribosome where it forms part of the central protuberance. This is Large ribosomal subunit protein bL25 from Nitrosomonas eutropha (strain DSM 101675 / C91 / Nm57).